The following is a 257-amino-acid chain: 1-(5-phosphoribosyl)-5-[(5-phosphoribosylamino)methylideneamino] imidazole-4-carboxamide isomerase (257 aa).

The Proton acceptor role is filled by D8. The active-site Proton donor is D129.

The protein belongs to the HisA/HisF family.

It is found in the cytoplasm. It carries out the reaction 1-(5-phospho-beta-D-ribosyl)-5-[(5-phospho-beta-D-ribosylamino)methylideneamino]imidazole-4-carboxamide = 5-[(5-phospho-1-deoxy-D-ribulos-1-ylimino)methylamino]-1-(5-phospho-beta-D-ribosyl)imidazole-4-carboxamide. The protein operates within amino-acid biosynthesis; L-histidine biosynthesis; L-histidine from 5-phospho-alpha-D-ribose 1-diphosphate: step 4/9. The polypeptide is 1-(5-phosphoribosyl)-5-[(5-phosphoribosylamino)methylideneamino] imidazole-4-carboxamide isomerase (Acaryochloris marina (strain MBIC 11017)).